The primary structure comprises 390 residues: GTPase Obg (390 aa).

The Obg domain occupies 1 to 159; that stretch reads MKFVDEASIL…RELLLELMLL (159 aa). The segment at 127-147 is disordered; it reads NTRFKSSVNRTPRQKTNGTPG. Residues 129 to 145 show a composition bias toward polar residues; the sequence is RFKSSVNRTPRQKTNGT. One can recognise an OBG-type G domain in the interval 160-333; the sequence is ADVGMLGMPN…LCWDVMTFIL (174 aa). GTP-binding positions include 166–173, 191–195, 213–216, 283–286, and 314–316; these read GMPNAGKS, FTTLV, DIPG, NKID, and SAA. Residues S173 and T193 each contribute to the Mg(2+) site.

This sequence belongs to the TRAFAC class OBG-HflX-like GTPase superfamily. OBG GTPase family. Monomer. Mg(2+) serves as cofactor.

The protein localises to the cytoplasm. Its function is as follows. An essential GTPase which binds GTP, GDP and possibly (p)ppGpp with moderate affinity, with high nucleotide exchange rates and a fairly low GTP hydrolysis rate. Plays a role in control of the cell cycle, stress response, ribosome biogenesis and in those bacteria that undergo differentiation, in morphogenesis control. This is GTPase Obg from Shigella sonnei (strain Ss046).